The following is a 121-amino-acid chain: Large ribosomal subunit protein bL12 (121 aa).

Belongs to the bacterial ribosomal protein bL12 family. In terms of assembly, homodimer. Part of the ribosomal stalk of the 50S ribosomal subunit. Forms a multimeric L10(L12)X complex, where L10 forms an elongated spine to which 2 to 4 L12 dimers bind in a sequential fashion. Binds GTP-bound translation factors.

Its function is as follows. Forms part of the ribosomal stalk which helps the ribosome interact with GTP-bound translation factors. Is thus essential for accurate translation. This chain is Large ribosomal subunit protein bL12, found in Clostridium beijerinckii (strain ATCC 51743 / NCIMB 8052) (Clostridium acetobutylicum).